The sequence spans 412 residues: FAD-dependent monooxygenase nscC (412 aa).

A signal peptide spans 1-21 (MGKQQETILIIGAGIAGLTTS). Residues E35 and A46 each coordinate FAD. N-linked (GlcNAc...) asparagine glycosylation is present at N92. R119 lines the FAD pocket. Residues N170 and N231 are each glycosylated (N-linked (GlcNAc...) asparagine). FAD is bound by residues D326 and G339.

It belongs to the paxM FAD-dependent monooxygenase family. The cofactor is FAD.

It functions in the pathway secondary metabolite biosynthesis. Its function is as follows. FAD-dependent monooxygenase; part of the gene cluster that mediates the biosynthesis of neosartoricin B, a prenylated anthracenone that probably exhibits T-cell antiproliferative activity, suggestive of a physiological role as an immunosuppressive agent. The non-reducing polyketide synthase nscA probably synthesizes and cyclizes the decaketide backbone. The hydrolase nscB then mediates the product release through hydrolysis followed by spontaneous decarboxylation. The prenyltransferase nscD catalyzes the addition of the dimethylallyl group to the aromatic C5. The FAD-dependent monooxygenase nscC is then responsible for the stereospecific hydroxylation at C2. Neosartoricin B can be converted into two additional compounds neosartoricins C and D. Neosartoricin C is a spirocyclic compound that is cyclized through the attack of C3 hydroxyl on C14, followed by dehydration. On the other hand, neosartoricin D is a further cyclized compound in which attack of C2 on C14 in neosartoricin C results in the formation of the acetal-containing dioxabicyclo-octanone ring. Both of these compounds are novel and possibly represent related metabolites of the gene cluster. This chain is FAD-dependent monooxygenase nscC, found in Trichophyton verrucosum (strain HKI 0517).